The chain runs to 286 residues: MSLILPLEKPALNLRPLLWLLLPLLVLATLFFWPLSLIVEQALRGANGEIGLETFRHVVDSKRFVGALLNTLQIAFFATAGCLLLGSAMSLILVFIPFPGSELIGRVVDTFIALPTFLITLAFTFIYGSAGLLNGTLMSLFAFELPPVDFLYSMQGVILAEITVFTPLVMRPLMAALRQIDKSQLEAASILGAHPLRVIGQVIFPAALPALMAGGSLCLLLTTNEFGIVLFIGAKGVNTLPMMVYSKAILESDYTVACMIALINIVLSLGLFSLYRLAASRTGVRS.

Helical transmembrane passes span 19 to 39 (WLLLPLLVLATLFFWPLSLIV), 76 to 96 (FFATAGCLLLGSAMSLILVFI), 111 to 131 (FIALPTFLITLAFTFIYGSAG), 150 to 170 (FLYSMQGVILAEITVFTPLVM), 202 to 222 (VIFPAALPALMAGGSLCLLLT), and 254 to 274 (YTVACMIALINIVLSLGLFSL). The ABC transmembrane type-1 domain occupies 68-275 (LLNTLQIAFF…VLSLGLFSLY (208 aa)).

The protein belongs to the binding-protein-dependent transport system permease family.

It localises to the cell inner membrane. Its function is as follows. Probably part of the PhnSTUV complex (TC 3.A.1.11.5) involved in 2-aminoethylphosphonate import. Probably responsible for the translocation of the substrate across the membrane. The polypeptide is Putative 2-aminoethylphosphonate transport system permease protein PhnU (phnU) (Salmonella choleraesuis (strain SC-B67)).